The sequence spans 271 residues: tRNA (guanine-N(1)-)-methyltransferase (271 aa).

S-adenosyl-L-methionine-binding positions include Gly120 and 145-150 (IGDYVL).

Belongs to the RNA methyltransferase TrmD family. In terms of assembly, homodimer.

The protein resides in the cytoplasm. The enzyme catalyses guanosine(37) in tRNA + S-adenosyl-L-methionine = N(1)-methylguanosine(37) in tRNA + S-adenosyl-L-homocysteine + H(+). Specifically methylates guanosine-37 in various tRNAs. The protein is tRNA (guanine-N(1)-)-methyltransferase of Bifidobacterium longum (strain NCC 2705).